Here is a 564-residue protein sequence, read N- to C-terminus: METKTIQLNPRSKNITEGKSRAPNRSMYYAMGYEEADFKKPMIGVANGHSTITPCNSGLQKLADAAIAGIEEAGGNAQVFGTPTISDGMAMGTEGMKYSLVSREVISDCIETCVQGQWMDGVLVIGGCDKNMPGGLMGMLRANVPAIYVYGGTILPGSYKGKDLNIVSVFEAVGENAAGRMSDEDLLQIERRAIPGTGSCGGMYTANTMSSAFEALGISLPYSSTMANPHDEKMNSARESAKVLVEAIKKDIKPRDLVTKKAIENAVAVIMATGGSTNAVLHFLAIAHAAGVDWTIDDFERVRQRTPVLCDLKPSGKYLAVDLHRAGGIPQVMKMLLAAGLLHGDCLTITGQTIAEVLKDVPEAPRADQDVIRPISNPMYAQGHLAILKGNLSPEGCVAKITGLKNPVMTGPARVFDDEQSALAAILAGKIKAGDVMVLRYLGPKGGPGMPEMLAPTGALIGAGLGESVGLITDGRFSGGTWGMVVGHVAPEAAAGGNIAFINEGDSITIDSKQLLLQLNISDAELEKRKVGWKAPAPRYNRGVQAKFAFNASSASKGAVLDDY.

Cys55 serves as a coordination point for [2Fe-2S] cluster. Asp87 lines the Mg(2+) pocket. Residue Cys128 coordinates [2Fe-2S] cluster. Mg(2+) contacts are provided by Asp129 and Lys130. An N6-carboxylysine modification is found at Lys130. Cys200 provides a ligand contact to [2Fe-2S] cluster. Glu452 is a binding site for Mg(2+). Ser478 functions as the Proton acceptor in the catalytic mechanism.

It belongs to the IlvD/Edd family. Homodimer. [2Fe-2S] cluster is required as a cofactor. It depends on Mg(2+) as a cofactor.

It carries out the reaction (2R)-2,3-dihydroxy-3-methylbutanoate = 3-methyl-2-oxobutanoate + H2O. The enzyme catalyses (2R,3R)-2,3-dihydroxy-3-methylpentanoate = (S)-3-methyl-2-oxopentanoate + H2O. Its pathway is amino-acid biosynthesis; L-isoleucine biosynthesis; L-isoleucine from 2-oxobutanoate: step 3/4. The protein operates within amino-acid biosynthesis; L-valine biosynthesis; L-valine from pyruvate: step 3/4. Functionally, functions in the biosynthesis of branched-chain amino acids. Catalyzes the dehydration of (2R,3R)-2,3-dihydroxy-3-methylpentanoate (2,3-dihydroxy-3-methylvalerate) into 2-oxo-3-methylpentanoate (2-oxo-3-methylvalerate) and of (2R)-2,3-dihydroxy-3-methylbutanoate (2,3-dihydroxyisovalerate) into 2-oxo-3-methylbutanoate (2-oxoisovalerate), the penultimate precursor to L-isoleucine and L-valine, respectively. This chain is Dihydroxy-acid dehydratase, found in Polaromonas sp. (strain JS666 / ATCC BAA-500).